The primary structure comprises 447 residues: Tubulin beta-5 chain (447 aa).

GTP contacts are provided by Gln-11, Glu-69, Ser-138, Gly-142, Thr-143, Gly-144, Asn-204, and Asn-226. Glu-69 serves as a coordination point for Mg(2+).

Belongs to the tubulin family. In terms of assembly, dimer of alpha and beta chains. A typical microtubule is a hollow water-filled tube with an outer diameter of 25 nm and an inner diameter of 15 nM. Alpha-beta heterodimers associate head-to-tail to form protofilaments running lengthwise along the microtubule wall with the beta-tubulin subunit facing the microtubule plus end conferring a structural polarity. Microtubules usually have 13 protofilaments but different protofilament numbers can be found in some organisms and specialized cells. Mg(2+) is required as a cofactor.

It localises to the cytoplasm. It is found in the cytoskeleton. Tubulin is the major constituent of microtubules, a cylinder consisting of laterally associated linear protofilaments composed of alpha- and beta-tubulin heterodimers. Microtubules grow by the addition of GTP-tubulin dimers to the microtubule end, where a stabilizing cap forms. Below the cap, tubulin dimers are in GDP-bound state, owing to GTPase activity of alpha-tubulin. This chain is Tubulin beta-5 chain (TUBB5), found in Triticum aestivum (Wheat).